A 272-amino-acid polypeptide reads, in one-letter code: Adenylate kinase (272 aa).

An ATP-binding site is contributed by 55 to 60; that stretch reads GAGKGT. Positions 75 to 104 are NMP; the sequence is ATGDMLRSQVAKKTPLGKEAKKIMDQGGLV. Residues threonine 76, arginine 81, 102–104, 131–134, and glutamine 138 contribute to the AMP site; these read GLV and GFPR. An LID region spans residues 172–209; it reads GRLVHPASGRSYHKIFNPPKQDMKDDITGEPLIQRSDD. Residues arginine 173 and 182-183 each bind ATP; that span reads SY. The AMP site is built by arginine 206 and arginine 217. Glutamine 245 lines the ATP pocket.

The protein belongs to the adenylate kinase family. AK2 subfamily. Monomer.

It localises to the cytoplasm. The protein resides in the cytosol. The protein localises to the mitochondrion intermembrane space. It catalyses the reaction AMP + ATP = 2 ADP. Its function is as follows. Catalyzes the reversible transfer of the terminal phosphate group between ATP and AMP. Plays an important role in cellular energy homeostasis and in adenine nucleotide metabolism. Adenylate kinase activity is critical for regulation of the phosphate utilization and the AMP de novo biosynthesis pathways. This is Adenylate kinase (adk1) from Talaromyces marneffei (Penicillium marneffei).